Consider the following 126-residue polypeptide: MPKASVVKIVVSDPKSGKAIQIETKEPQWLYGKKIGDTIDGSKIGLDGYELKITGGSDIAGFPMRKEVEGAVRKKIWWWVDKRMRVKKTVYGNTISDEIVQVNTVIVKYGEKPFEEIYNEFKSNKQ.

It belongs to the eukaryotic ribosomal protein eS6 family.

This is Small ribosomal subunit protein eS6 from Nanoarchaeum equitans (strain Kin4-M).